The following is a 366-amino-acid chain: tRNA/tmRNA (uracil-C(5))-methyltransferase (366 aa).

5 residues coordinate S-adenosyl-L-methionine: Q190, Y218, N223, E239, and D299. The Nucleophile role is filled by C324. Catalysis depends on E358, which acts as the Proton acceptor.

The protein belongs to the class I-like SAM-binding methyltransferase superfamily. RNA M5U methyltransferase family. TrmA subfamily.

It catalyses the reaction uridine(54) in tRNA + S-adenosyl-L-methionine = 5-methyluridine(54) in tRNA + S-adenosyl-L-homocysteine + H(+). It carries out the reaction uridine(341) in tmRNA + S-adenosyl-L-methionine = 5-methyluridine(341) in tmRNA + S-adenosyl-L-homocysteine + H(+). Functionally, dual-specificity methyltransferase that catalyzes the formation of 5-methyluridine at position 54 (m5U54) in all tRNAs, and that of position 341 (m5U341) in tmRNA (transfer-mRNA). In Cellvibrio japonicus (strain Ueda107) (Pseudomonas fluorescens subsp. cellulosa), this protein is tRNA/tmRNA (uracil-C(5))-methyltransferase.